Reading from the N-terminus, the 534-residue chain is Cargo protein 2 (534 aa).

In terms of assembly, homododecamer. Localizes inside the capsid.

The protein resides in the virion. Functionally, protein that is stored in high quantity in the viral capsid and may play a role during ejection. The polypeptide is Cargo protein 2 (Bacteroides intestinalis (Bacteroides phage PhiCrAss001)).